Reading from the N-terminus, the 642-residue chain is Chaperone protein DnaK (642 aa).

Thr199 is subject to Phosphothreonine; by autocatalysis. A compositionally biased stretch (basic and acidic residues) spans 570–585 (EELEQASKDGDKEAID). Residues 570–642 (EELEQASKDG…FEEVKDDDKK (73 aa)) form a disordered region. Residues 600 to 620 (EAAQQQQAQQGAEGAAGGEQQ) are compositionally biased toward low complexity. The segment covering 627–642 (DVVDAEFEEVKDDDKK) has biased composition (acidic residues).

Belongs to the heat shock protein 70 family.

Functionally, acts as a chaperone. The polypeptide is Chaperone protein DnaK (Idiomarina loihiensis (strain ATCC BAA-735 / DSM 15497 / L2-TR)).